A 748-amino-acid chain; its full sequence is Acetyl-CoA decarbonylase/synthase complex subunit beta 1 (748 aa).

[Ni-Fe-S] cluster is bound by residues Cys-480, Cys-483, Cys-569, and Cys-571.

This sequence belongs to the CdhC family. In terms of assembly, monomer. The ACDS complex is made up of alpha, epsilon, beta, gamma and delta chains with a probable stoichiometry of (alpha(2)epsilon(2))(4)-beta(8)-(gamma(1)delta(1))(8) (Potential). Requires [Ni-Fe-S] cluster as cofactor.

The enzyme catalyses Co(I)-[corrinoid Fe-S protein] + acetyl-CoA + H(+) = methyl-Co(III)-[corrinoid Fe-S protein] + CO + CoA. Part of a complex that catalyzes the reversible cleavage of acetyl-CoA, allowing autotrophic growth from CO(2). The alpha-epsilon complex generates CO from CO(2), while the beta subunit (this protein) combines the CO with CoA and a methyl group to form acetyl-CoA. The methyl group, which is incorporated into acetyl-CoA, is transferred to the beta subunit by a corrinoid iron-sulfur protein (the gamma-delta complex). The sequence is that of Acetyl-CoA decarbonylase/synthase complex subunit beta 1 (cdhC1) from Methanocaldococcus jannaschii (strain ATCC 43067 / DSM 2661 / JAL-1 / JCM 10045 / NBRC 100440) (Methanococcus jannaschii).